The chain runs to 121 residues: Flagellar protein FliT (121 aa).

The required for homodimerization stretch occupies residues 1–50 (MNHAPHLYFAWQQLVEKSQLMLRLATEEQWDELIASEMAYVNAVQEIAHL). The fliD binding stretch occupies residues 60–98 (MQEQLRPMLRLILDNESKVKQLLQIRMDELAKLVGQSSV).

It belongs to the FliT family. As to quaternary structure, homodimer. Interacts with FliD and FlhC.

The protein resides in the cytoplasm. The protein localises to the cytosol. Dual-function protein that regulates the transcription of class 2 flagellar operons and that also acts as an export chaperone for the filament-capping protein FliD. As a transcriptional regulator, acts as an anti-FlhDC factor; it directly binds FlhC, thus inhibiting the binding of the FlhC/FlhD complex to class 2 promoters, resulting in decreased expression of class 2 flagellar operons. As a chaperone, effects FliD transition to the membrane by preventing its premature polymerization, and by directing it to the export apparatus. This Escherichia coli O157:H7 protein is Flagellar protein FliT.